The following is a 1293-amino-acid chain: Late blight resistance protein R1-A (1293 aa).

Coiled-coil stretches lie at residues 423–446 (RYSD…ESLQ) and 538–560 (PRMN…KLLN). Residues 539 to 826 (RMNEEIVGFE…SEAFIKSSEG (288 aa)) enclose the NB-ARC domain. 572–579 (GMPGLGKT) provides a ligand contact to ATP. LRR repeat units lie at residues 876–899 (AEEN…VYSH), 956–981 (FKFL…VYLK), 1027–1049 (MVKL…LLEN), 1056–1079 (LETL…KTPN), 1102–1125 (PIRL…ISAP), 1149–1172 (LKHL…KVSN), 1175–1197 (FPQL…ADDA), 1198–1222 (FPNL…FMDI), and 1235–1259 (ESVV…NFKL).

Belongs to the disease resistance NB-LRR family.

It localises to the cytoplasm. Its subcellular location is the membrane. Functionally, confers resistance to late blight (Phytophthora infestans) races carrying the avirulence gene Avr1. Resistance proteins guard the plant against pathogens that contain an appropriate avirulence protein via an indirect interaction with this avirulence protein. That triggers a defense system including the hypersensitive response, which restricts the pathogen growth. The sequence is that of Late blight resistance protein R1-A (R1A) from Solanum demissum (Wild potato).